Here is a 326-residue protein sequence, read N- to C-terminus: Beta-ketoacyl-[acyl-carrier-protein] synthase III (326 aa).

Residues C111 and H252 contribute to the active site. Residues 253–257 (QANIR) form an ACP-binding region. N282 is an active-site residue.

This sequence belongs to the thiolase-like superfamily. FabH family. In terms of assembly, homodimer.

Its subcellular location is the plastid. The protein localises to the chloroplast. It catalyses the reaction malonyl-[ACP] + acetyl-CoA + H(+) = 3-oxobutanoyl-[ACP] + CO2 + CoA. It participates in lipid metabolism; fatty acid biosynthesis. Functionally, catalyzes the condensation reaction of fatty acid synthesis by the addition to an acyl acceptor of two carbons from malonyl-ACP. Catalyzes the first condensation reaction which initiates fatty acid synthesis and may therefore play a role in governing the total rate of fatty acid production. Possesses both acetoacetyl-ACP synthase and acetyl transacylase activities. Its substrate specificity determines the biosynthesis of branched-chain and/or straight-chain of fatty acids. In Porphyra umbilicalis (Purple laver), this protein is Beta-ketoacyl-[acyl-carrier-protein] synthase III.